Here is a 133-residue protein sequence, read N- to C-terminus: Small ribosomal subunit protein uS11 (133 aa).

Belongs to the universal ribosomal protein uS11 family. In terms of assembly, part of the 30S ribosomal subunit.

Functionally, located on the platform of the 30S subunit. The polypeptide is Small ribosomal subunit protein uS11 (Hyperthermus butylicus (strain DSM 5456 / JCM 9403 / PLM1-5)).